Here is a 1107-residue protein sequence, read N- to C-terminus: Dynein axonemal assembly factor 1 homolog (1107 aa).

6 LRR repeats span residues 34-56 (HLNDILYLNYSGYNAIESLEEYV), 57-78 (GLKCLWLECNAISEIKGLEYQT), 79-100 (ELKCLYLQNNLITKIENLDSCK), 101-122 (QLDTLNLSHNHITRIENCGHDI), 125-146 (VLNTLNLSHNYLKTADNLDHLR), and 150-171 (FVSVLDLSHNRIEDIAIVKILG). The LRRCT domain occupies 184–223 (NPVVNEIPSYRKTLILECKNLTYLDTRPVFDRDRACAEAW). 6 disordered regions span residues 258–281 (HRGDGEPELLKTSSDEEDEDKASK), 428–487 (NESP…TLNV), 500–608 (ESKD…LEKE), 780–810 (KEEPKAPETPSIESEEEIPEELEVHSSEHEQ), 834–855 (SSEDLKSNFDDSSESSDSAEED), and 1070–1107 (AAHAGEVMQDTEDVESKPVEIDGTKEETVDSELADNCD). Over residues 428–437 (NESPLTSPSF) the composition is skewed to polar residues. Residues 446–459 (EEIEPTDVEEEQQI) show a composition bias toward acidic residues. The segment covering 500-512 (ESKDGELISKVES) has biased composition (basic and acidic residues). The segment covering 531-544 (DNSESEPTDITNED) has biased composition (acidic residues). A compositionally biased stretch (low complexity) spans 549–560 (SSSVSVTSSTDS). Residues 581 to 597 (NYRQDSTTSTDSENEVS) show a composition bias toward polar residues. The span at 801 to 810 (LEVHSSEHEQ) shows a compositional bias: basic and acidic residues. The segment covering 844–855 (DSSESSDSAEED) has biased composition (acidic residues). Residues 1083-1097 (VESKPVEIDGTKEET) are compositionally biased toward basic and acidic residues. Residues 1098-1107 (VDSELADNCD) show a composition bias toward acidic residues.

The protein belongs to the DNAAF1 family.

The protein localises to the cell projection. The protein resides in the cilium. Cilium-specific protein required for cilia structures. This Aedes aegypti (Yellowfever mosquito) protein is Dynein axonemal assembly factor 1 homolog.